The primary structure comprises 146 residues: Hemoglobin subunit beta-2 (146 aa).

A Globin domain is found at 2 to 146 (KWTDKERAVI…VVSALGKQYC (145 aa)). Histidine 63 and histidine 92 together coordinate heme b.

Belongs to the globin family. As to quaternary structure, heterotetramer of two alpha chains and two beta chains. As to expression, red blood cells.

Its function is as follows. Involved in oxygen transport from gills to the various peripheral tissues. This is Hemoglobin subunit beta-2 (hbb2) from Lycodes reticulatus (Arctic eelpout).